A 108-amino-acid chain; its full sequence is Large ribosomal subunit protein uL24 (108 aa).

The protein belongs to the universal ribosomal protein uL24 family. Part of the 50S ribosomal subunit.

In terms of biological role, one of two assembly initiator proteins, it binds directly to the 5'-end of the 23S rRNA, where it nucleates assembly of the 50S subunit. Functionally, one of the proteins that surrounds the polypeptide exit tunnel on the outside of the subunit. This chain is Large ribosomal subunit protein uL24, found in Trichlorobacter lovleyi (strain ATCC BAA-1151 / DSM 17278 / SZ) (Geobacter lovleyi).